We begin with the raw amino-acid sequence, 281 residues long: Auxin-responsive protein IAA10 (281 aa).

2 disordered regions span residues 1 to 115 (MRGG…VVGW) and 130 to 157 (AKEN…EEGE). The span at 7–17 (GPTAGEPPGTE) shows a compositional bias: low complexity. A compositionally biased stretch (acidic residues) spans 18 to 35 (AEAEEVEESSAGDDEELE). An EAR-like (transcriptional repression) motif is present at residues 36 to 40 (LGLSL). Low complexity-rich tracts occupy residues 36-49 (LGLS…QQQQ) and 63-84 (PAAA…AAAA). Residues 133 to 157 (NTSETDTKKTATNESDVQKDKEEGE) show a composition bias toward basic and acidic residues. Residues 163-259 (AGWVKVNMDG…KRLRIMRTSD (97 aa)) form the PB1 domain.

It belongs to the Aux/IAA family. In terms of assembly, homodimers and heterodimers. As to expression, highly expressed in flowers. Expressed in shoots.

The protein localises to the nucleus. In terms of biological role, aux/IAA proteins are short-lived transcriptional factors that function as repressors of early auxin response genes at low auxin concentrations. This Oryza sativa subsp. indica (Rice) protein is Auxin-responsive protein IAA10 (IAA10).